A 226-amino-acid polypeptide reads, in one-letter code: Ribonuclease 3 (226 aa).

One can recognise an RNase III domain in the interval 6–128 (ANKIQQILGY…LIGSIYLDSN (123 aa)). Mg(2+) is bound at residue Glu-41. Asp-45 is an active-site residue. Mg(2+)-binding residues include Asn-114 and Glu-117. Glu-117 is a catalytic residue. Positions 155–225 (DPKTRLQEYL…ARKALIKLGV (71 aa)) constitute a DRBM domain.

This sequence belongs to the ribonuclease III family. In terms of assembly, homodimer. Mg(2+) is required as a cofactor.

It is found in the cytoplasm. It carries out the reaction Endonucleolytic cleavage to 5'-phosphomonoester.. Its function is as follows. Digests double-stranded RNA. Involved in the processing of primary rRNA transcript to yield the immediate precursors to the large and small rRNAs (23S and 16S). Processes some mRNAs, and tRNAs when they are encoded in the rRNA operon. Processes pre-crRNA and tracrRNA of type II CRISPR loci if present in the organism. This is Ribonuclease 3 from Buchnera aphidicola subsp. Schizaphis graminum (strain Sg).